Reading from the N-terminus, the 309-residue chain is THAP domain-containing protein 7 (309 aa).

The segment at 1-93 (MPRHCSAAGC…LKEGAVPTIF (93 aa)) adopts a THAP-type zinc-finger fold. Position 162 is a phosphoserine (Ser-162). Positions 176–210 (SDLLGPLGAQADEAGCSTQPSPEQHPSPLEPQPAS) are disordered. The segment covering 198–209 (EQHPSPLEPQPA) has biased composition (pro residues). A Phosphoserine modification is found at Ser-210. An HCFC1-binding motif (HBM) motif is present at residues 229-232 (EHSY).

Forms homodimers. Interacts with HDAC3 and nuclear hormone receptor corepressors. Interacts via HBM with HCFC1.

It localises to the nucleus. Its subcellular location is the chromosome. In terms of biological role, chromatin-associated, histone tail-binding protein that represses transcription via recruitment of HDAC3 and nuclear hormone receptor corepressors. The sequence is that of THAP domain-containing protein 7 (Thap7) from Mus musculus (Mouse).